The following is a 303-amino-acid chain: Eukaryotic translation initiation factor 3 subunit F (303 aa).

Over residues 1–10 the composition is skewed to polar residues; that stretch reads MSLDTSSSAI. The interval 1-25 is disordered; sequence MSLDTSSSAIHLQLPPTSSSLRPPS. Residues 12–25 are compositionally biased toward low complexity; that stretch reads LQLPPTSSSLRPPS. The MPN domain maps to 27–165; sequence ITVHPSVIAQ…VKGWVSQPLG (139 aa).

This sequence belongs to the eIF-3 subunit F family. In terms of assembly, component of the eukaryotic translation initiation factor 3 (eIF-3) complex.

It is found in the cytoplasm. Functionally, component of the eukaryotic translation initiation factor 3 (eIF-3) complex, which is involved in protein synthesis of a specialized repertoire of mRNAs and, together with other initiation factors, stimulates binding of mRNA and methionyl-tRNAi to the 40S ribosome. The eIF-3 complex specifically targets and initiates translation of a subset of mRNAs involved in cell proliferation. The protein is Eukaryotic translation initiation factor 3 subunit F of Cryptococcus neoformans var. neoformans serotype D (strain B-3501A) (Filobasidiella neoformans).